The chain runs to 509 residues: Cobyric acid synthase (509 aa).

Residues 262-459 (EIKVGIIKLP…IHGIFENDIW (198 aa)) enclose the GATase cobBQ-type domain. Catalysis depends on Cys-343, which acts as the Nucleophile. His-451 is a catalytic residue.

Belongs to the CobB/CobQ family. CobQ subfamily.

The protein operates within cofactor biosynthesis; adenosylcobalamin biosynthesis. Catalyzes amidations at positions B, D, E, and G on adenosylcobyrinic A,C-diamide. NH(2) groups are provided by glutamine, and one molecule of ATP is hydrogenolyzed for each amidation. The sequence is that of Cobyric acid synthase from Prochlorococcus marinus (strain MIT 9312).